We begin with the raw amino-acid sequence, 442 residues long: Putative nucleotide-sugar transporter YMD8 (442 aa).

Residues 1-3 lie on the Cytoplasmic side of the membrane; it reads MNR. A helical membrane pass occupies residues 4 to 24; it reads TVFLAFVFGWYFCSIALSIYN. Topologically, residues 25-32 are extracellular; the sequence is RWMFDPKD. A helical membrane pass occupies residues 33 to 53; it reads GLGIGYPVLVTTFHQATLWLL. Residues 54 to 76 are Cytoplasmic-facing; that stretch reads SGIYIKLRHKPVKNVLRKNNGFN. Residues 77–97 traverse the membrane as a helical segment; sequence WSFFLKFLLPTAVASAGDIGL. Residues 98-107 lie on the Extracellular side of the membrane; sequence SNVSFQYVPL. Asn99 carries N-linked (GlcNAc...) asparagine glycosylation. Residues 108-128 traverse the membrane as a helical segment; the sequence is TIYTIIKSSSIAFVLLFGCIF. Over 129–132 the chain is Cytoplasmic; that stretch reads KLEK. Residues 133–153 form a helical membrane-spanning segment; sequence FHWKLALSVIIMFVGVALMVF. At 154-166 the chain is on the extracellular side; it reads KPSDSTSTKNDQA. Residues 167-187 traverse the membrane as a helical segment; that stretch reads LVIFGSFLVLASSCLSGLRWV. Residues 188 to 254 are Cytoplasmic-facing; sequence YTQLMLRNNP…PIHTIHQLAP (67 aa). At Ser209 the chain carries Phosphoserine. Residues 255-275 traverse the membrane as a helical segment; the sequence is IMGITLLLTSLLVEKPFPGIF. The Extracellular portion of the chain corresponds to 276-301; it reads SSSIFRLDTSNGGVGTETTVLSIVRG. The helical transmembrane segment at 302 to 322 threads the bilayer; the sequence is IVLLILPGFAVFLLTICEFSI. Topologically, residues 323 to 329 are cytoplasmic; it reads LEQTPVL. Residues 330-350 traverse the membrane as a helical segment; it reads TVSIVGIVKELLTVIFGIIIL. The Extracellular segment spans residues 351–355; sequence SERLS. A helical transmembrane segment spans residues 356–376; sequence GFYNWLGMLIIMADVCYYNYF. Topologically, residues 377 to 442 are cytoplasmic; that stretch reads RYKQDLLQKY…QNVSRSSQQV (66 aa).

Belongs to the TPT transporter family. SLC35C subfamily.

It localises to the golgi apparatus membrane. The protein localises to the cytoplasmic vesicle. The protein resides in the COPI-coated vesicle membrane. The polypeptide is Putative nucleotide-sugar transporter YMD8 (YMD8) (Saccharomyces cerevisiae (strain ATCC 204508 / S288c) (Baker's yeast)).